Reading from the N-terminus, the 323-residue chain is Aspartate carbamoyltransferase catalytic subunit (323 aa).

Residues R71 and T72 each contribute to the carbamoyl phosphate site. K99 provides a ligand contact to L-aspartate. The carbamoyl phosphate site is built by R121, H151, and Q154. Positions 184 and 239 each coordinate L-aspartate. Residues G280 and P281 each contribute to the carbamoyl phosphate site.

Belongs to the aspartate/ornithine carbamoyltransferase superfamily. ATCase family. As to quaternary structure, heterododecamer (2C3:3R2) of six catalytic PyrB chains organized as two trimers (C3), and six regulatory PyrI chains organized as three dimers (R2).

It catalyses the reaction carbamoyl phosphate + L-aspartate = N-carbamoyl-L-aspartate + phosphate + H(+). It functions in the pathway pyrimidine metabolism; UMP biosynthesis via de novo pathway; (S)-dihydroorotate from bicarbonate: step 2/3. In terms of biological role, catalyzes the condensation of carbamoyl phosphate and aspartate to form carbamoyl aspartate and inorganic phosphate, the committed step in the de novo pyrimidine nucleotide biosynthesis pathway. The sequence is that of Aspartate carbamoyltransferase catalytic subunit from Ralstonia nicotianae (strain ATCC BAA-1114 / GMI1000) (Ralstonia solanacearum).